Reading from the N-terminus, the 428-residue chain is Serine--tRNA ligase (428 aa).

235-237 lines the L-serine pocket; the sequence is TAE. 266-268 serves as a coordination point for ATP; the sequence is RSE. Residue Glu-289 participates in L-serine binding. 353–356 serves as a coordination point for ATP; the sequence is EISS. Ser-389 serves as a coordination point for L-serine.

This sequence belongs to the class-II aminoacyl-tRNA synthetase family. Type-1 seryl-tRNA synthetase subfamily. Homodimer. The tRNA molecule binds across the dimer.

The protein localises to the cytoplasm. It catalyses the reaction tRNA(Ser) + L-serine + ATP = L-seryl-tRNA(Ser) + AMP + diphosphate + H(+). The enzyme catalyses tRNA(Sec) + L-serine + ATP = L-seryl-tRNA(Sec) + AMP + diphosphate + H(+). The protein operates within aminoacyl-tRNA biosynthesis; selenocysteinyl-tRNA(Sec) biosynthesis; L-seryl-tRNA(Sec) from L-serine and tRNA(Sec): step 1/1. In terms of biological role, catalyzes the attachment of serine to tRNA(Ser). Is also able to aminoacylate tRNA(Sec) with serine, to form the misacylated tRNA L-seryl-tRNA(Sec), which will be further converted into selenocysteinyl-tRNA(Sec). The sequence is that of Serine--tRNA ligase from Shewanella sp. (strain W3-18-1).